A 97-amino-acid polypeptide reads, in one-letter code: Co-chaperonin GroES (97 aa).

Belongs to the GroES chaperonin family. In terms of assembly, heptamer of 7 subunits arranged in a ring. Interacts with the chaperonin GroEL.

The protein resides in the cytoplasm. Its function is as follows. Together with the chaperonin GroEL, plays an essential role in assisting protein folding. The GroEL-GroES system forms a nano-cage that allows encapsulation of the non-native substrate proteins and provides a physical environment optimized to promote and accelerate protein folding. GroES binds to the apical surface of the GroEL ring, thereby capping the opening of the GroEL channel. In Photorhabdus laumondii subsp. laumondii (strain DSM 15139 / CIP 105565 / TT01) (Photorhabdus luminescens subsp. laumondii), this protein is Co-chaperonin GroES.